The following is a 220-amino-acid chain: Miraculin (220 aa).

The first 29 residues, 1–29, serve as a signal peptide directing secretion; that stretch reads MKELTMLSLSFFFVSALLAAAANPLLSAA. The N-linked (GlcNAc...) asparagine glycan is linked to Asn71. Intrachain disulfides connect Cys76/Cys121, Cys177/Cys188, and Cys181/Cys184. Asn215 carries an N-linked (GlcNAc...) asparagine glycan.

This sequence belongs to the protease inhibitor I3 (leguminous Kunitz-type inhibitor) family. In terms of assembly, homotetramer; dimer of homodimer. Post-translationally, glycosylated; contains as much as 13,9% of sugars (glucosamine, mannose, galactose, xylose, and fucose). In terms of tissue distribution, expressed in fruit pulp after pollination. Not expressed in seeds, stems or leaves.

Functionally, miraculin has the property of modifying a sour taste into a sweet taste. This alteration of taste perception persists for many minutes. The protein is Miraculin of Synsepalum dulcificum (Miracle fruit).